A 31-amino-acid chain; its full sequence is Photosystem I reaction center subunit XII (31 aa).

Residues 7–26 (QISIILLIALIPAFFSLKLG) traverse the membrane as a helical segment.

Belongs to the PsaM family.

The protein localises to the plastid. It is found in the chloroplast thylakoid membrane. This chain is Photosystem I reaction center subunit XII, found in Euglena myxocylindracea.